Reading from the N-terminus, the 175-residue chain is Chorismate pyruvate-lyase (175 aa).

Positions 36, 78, 116, and 157 each coordinate substrate.

This sequence belongs to the UbiC family. As to quaternary structure, monomer.

Its subcellular location is the cytoplasm. The catalysed reaction is chorismate = 4-hydroxybenzoate + pyruvate. It functions in the pathway cofactor biosynthesis; ubiquinone biosynthesis. In terms of biological role, removes the pyruvyl group from chorismate, with concomitant aromatization of the ring, to provide 4-hydroxybenzoate (4HB) for the ubiquinone pathway. The chain is Chorismate pyruvate-lyase from Hamiltonella defensa subsp. Acyrthosiphon pisum (strain 5AT).